We begin with the raw amino-acid sequence, 205 residues long: Imidazole glycerol phosphate synthase subunit HisH (205 aa).

The 205-residue stretch at 1–205 (MIALVDYGGG…FFKMALGDKK (205 aa)) folds into the Glutamine amidotransferase type-1 domain. The active-site Nucleophile is the C79. Residues H181 and E183 contribute to the active site.

As to quaternary structure, heterodimer of HisH and HisF.

The protein resides in the cytoplasm. It carries out the reaction 5-[(5-phospho-1-deoxy-D-ribulos-1-ylimino)methylamino]-1-(5-phospho-beta-D-ribosyl)imidazole-4-carboxamide + L-glutamine = D-erythro-1-(imidazol-4-yl)glycerol 3-phosphate + 5-amino-1-(5-phospho-beta-D-ribosyl)imidazole-4-carboxamide + L-glutamate + H(+). The enzyme catalyses L-glutamine + H2O = L-glutamate + NH4(+). Its pathway is amino-acid biosynthesis; L-histidine biosynthesis; L-histidine from 5-phospho-alpha-D-ribose 1-diphosphate: step 5/9. IGPS catalyzes the conversion of PRFAR and glutamine to IGP, AICAR and glutamate. The HisH subunit catalyzes the hydrolysis of glutamine to glutamate and ammonia as part of the synthesis of IGP and AICAR. The resulting ammonia molecule is channeled to the active site of HisF. The sequence is that of Imidazole glycerol phosphate synthase subunit HisH from Dehalococcoides mccartyi (strain ATCC BAA-2266 / KCTC 15142 / 195) (Dehalococcoides ethenogenes (strain 195)).